A 263-amino-acid chain; its full sequence is Shikimate dehydrogenase (NADP(+)) (263 aa).

Residues Ser-16–Ser-18 and Thr-65 contribute to the shikimate site. Lys-69 functions as the Proton acceptor in the catalytic mechanism. Shikimate is bound by residues Asn-90 and Asp-105. NADP(+)-binding positions include Gly-125–Ser-129 and Leu-208. Tyr-210 is a binding site for shikimate. An NADP(+)-binding site is contributed by Gly-230.

It belongs to the shikimate dehydrogenase family. In terms of assembly, homodimer.

It catalyses the reaction shikimate + NADP(+) = 3-dehydroshikimate + NADPH + H(+). Its pathway is metabolic intermediate biosynthesis; chorismate biosynthesis; chorismate from D-erythrose 4-phosphate and phosphoenolpyruvate: step 4/7. In terms of biological role, involved in the biosynthesis of the chorismate, which leads to the biosynthesis of aromatic amino acids. Catalyzes the reversible NADPH linked reduction of 3-dehydroshikimate (DHSA) to yield shikimate (SA). This Helicobacter pylori (strain G27) protein is Shikimate dehydrogenase (NADP(+)).